Here is a 244-residue protein sequence, read N- to C-terminus: uncharacterized protein (244 aa).

Positions 1 to 78 (MKKRFIYHDE…PKFNFMDRYY (78 aa)) constitute a WGR domain.

This is an uncharacterized protein from Escherichia coli (strain K12).